A 1013-amino-acid polypeptide reads, in one-letter code: Endosome/lysosome-associated apoptosis and autophagy regulator 1 (1013 aa).

An N-terminal signal peptide occupies residues 1–41; the sequence is MAEPGHSHHLSARVRGRTERRIPRLWRLLLWAGTAFQVTQG. Residues 42–910 are Extracellular-facing; sequence TGPELHACKE…ICKTIDFWLK (869 aa). A glycan (N-linked (GlcNAc...) asparagine) is linked at asparagine 153. Cystine bridges form between cysteine 278–cysteine 295, cysteine 308–cysteine 330, and cysteine 311–cysteine 342. 2 N-linked (GlcNAc...) asparagine glycosylation sites follow: asparagine 404 and asparagine 672. In terms of domain architecture, MRH spans 656–858; it reads NDCTFSRNTP…LWESAAACPL (203 aa). Disulfide bonds link cysteine 658–cysteine 704, cysteine 714–cysteine 739, cysteine 808–cysteine 844, and cysteine 820–cysteine 856. The helical transmembrane segment at 911–931 threads the bilayer; it reads VGISAGTCTAILLTVLTCYFW. Topologically, residues 932–1013 are cytoplasmic; the sequence is KKNQKLEYKY…TSSGGLDMDL (82 aa).

This sequence belongs to the ELAPOR family. In terms of assembly, interacts with HSPA5; may regulate the function of HSPA5 in apoptosis and cell proliferation. Expressed in normal endometrium but overexpressed in endometroid tumors.

It localises to the cell membrane. The protein localises to the late endosome membrane. The protein resides in the golgi apparatus. It is found in the trans-Golgi network membrane. Its subcellular location is the lysosome membrane. It localises to the endoplasmic reticulum membrane. In terms of biological role, may protect cells from cell death by inducing cytosolic vacuolization and up-regulating the autophagy pathway. May play a role in apoptosis and cell proliferation through its interaction with HSPA5. In Homo sapiens (Human), this protein is Endosome/lysosome-associated apoptosis and autophagy regulator 1.